A 210-amino-acid polypeptide reads, in one-letter code: Large ribosomal subunit protein uL3 (210 aa).

It belongs to the universal ribosomal protein uL3 family. As to quaternary structure, part of the 50S ribosomal subunit. Forms a cluster with proteins L14 and L19.

In terms of biological role, one of the primary rRNA binding proteins, it binds directly near the 3'-end of the 23S rRNA, where it nucleates assembly of the 50S subunit. This is Large ribosomal subunit protein uL3 from Syntrophotalea carbinolica (strain DSM 2380 / NBRC 103641 / GraBd1) (Pelobacter carbinolicus).